A 207-amino-acid polypeptide reads, in one-letter code: MSYSGERDQFAPNMALVPMVVEQTSRGERSYDIFSRLLKERIIFLTGQVEDHMANLITAQMLFLEAENPEKDIFLYINSPGGVITAGMSIYDTMQFIKPDVSTICMGQACSMGAFLLTAGAKGKRFCLPNSRVMIHQPLGGFQGQATDIEIHAKEILKVKSRMNELMAYHTGKSLEEIERDTERDRFLSAEQSVEYGLVDSVFTRRD.

Catalysis depends on serine 111, which acts as the Nucleophile. Histidine 136 is an active-site residue.

Belongs to the peptidase S14 family. As to quaternary structure, fourteen ClpP subunits assemble into 2 heptameric rings which stack back to back to give a disk-like structure with a central cavity, resembling the structure of eukaryotic proteasomes.

The protein localises to the cytoplasm. The enzyme catalyses Hydrolysis of proteins to small peptides in the presence of ATP and magnesium. alpha-casein is the usual test substrate. In the absence of ATP, only oligopeptides shorter than five residues are hydrolyzed (such as succinyl-Leu-Tyr-|-NHMec, and Leu-Tyr-Leu-|-Tyr-Trp, in which cleavage of the -Tyr-|-Leu- and -Tyr-|-Trp bonds also occurs).. Functionally, cleaves peptides in various proteins in a process that requires ATP hydrolysis. Has a chymotrypsin-like activity. Plays a major role in the degradation of misfolded proteins. This Yersinia pseudotuberculosis serotype O:1b (strain IP 31758) protein is ATP-dependent Clp protease proteolytic subunit.